Reading from the N-terminus, the 543-residue chain is Oxalate--CoA ligase (543 aa).

Position 196–207 (196–207 (HTSGTTSTPKTV)) interacts with ATP. The short motif at 410–458 (ENYFRTGDQGYFDPEGFLVLTGRIKELINRGGEKISPIELDGIMLSHPK) is the FACS element. Residues 541–543 (SKL) carry the C-terminal peroxisome targeting signal (PTS1) motif.

The protein belongs to the ATP-dependent AMP-binding enzyme family. Interacts with PEX5.

It is found in the peroxisome matrix. The protein localises to the peroxisome membrane. It catalyses the reaction oxalate + ATP + CoA = oxalyl-CoA + AMP + diphosphate. Catalyzes the first step in a degradation pathway of oxalate to CO(2) to protect the cell against the harmful effects of oxalate derived from endogenous processes or an environmental sources. In Saccharomyces cerevisiae (strain ATCC 204508 / S288c) (Baker's yeast), this protein is Oxalate--CoA ligase.